The primary structure comprises 450 residues: Phosphoglucosamine mutase (450 aa).

Ser102 (phosphoserine intermediate) is an active-site residue. Mg(2+)-binding residues include Ser102, Asp243, Asp245, and Asp247. A Phosphoserine modification is found at Ser102.

Belongs to the phosphohexose mutase family. Mg(2+) is required as a cofactor. Activated by phosphorylation.

It catalyses the reaction alpha-D-glucosamine 1-phosphate = D-glucosamine 6-phosphate. Catalyzes the conversion of glucosamine-6-phosphate to glucosamine-1-phosphate. The polypeptide is Phosphoglucosamine mutase (Rhizobium leguminosarum bv. trifolii (strain WSM2304)).